The chain runs to 223 residues: Glutathione S-transferase U6 (223 aa).

In terms of domain architecture, GST N-terminal spans 5–84 (EEVKLLGIWA…YIDETWKHNP (80 aa)). Glutathione-binding positions include 15-16 (SP), 41-42 (NK), 55-56 (KI), and 68-69 (ES). The 128-residue stretch at 89–216 (DPFQRSKARV…EKHIEHMNNM (128 aa)) folds into the GST C-terminal domain. T150 carries the phosphothreonine modification.

The protein belongs to the GST superfamily. Tau family.

It is found in the cytoplasm. The protein resides in the cytosol. It catalyses the reaction RX + glutathione = an S-substituted glutathione + a halide anion + H(+). May be involved in the conjugation of reduced glutathione to a wide number of exogenous and endogenous hydrophobic electrophiles and have a detoxification role against certain herbicides. This chain is Glutathione S-transferase U6 (GSTU6), found in Arabidopsis thaliana (Mouse-ear cress).